Reading from the N-terminus, the 359-residue chain is Serine hydrolase-like protein DDB_G0286239 (359 aa).

Residues 38–289 (LALHGWLDNA…VPGSHHFHME (252 aa)) form the AB hydrolase-1 domain. S111 is an active-site residue. The segment at 310–359 (FTPSSTTQQQQQQQQSAENKKGDNHNQIAEQDLSTSNTSSPIISKPKPNL) is disordered. The segment covering 334–351 (HNQIAEQDLSTSNTSSPI) has biased composition (polar residues).

Belongs to the AB hydrolase superfamily.

Its function is as follows. Probable serine hydrolase. In Dictyostelium discoideum (Social amoeba), this protein is Serine hydrolase-like protein DDB_G0286239.